The chain runs to 365 residues: tRNA 2-selenouridine synthase (365 aa).

A Rhodanese domain is found at 15–138 (LVNDHPIMDA…MRQFLIETID (124 aa)). Residue Cys-98 is the S-selanylcysteine intermediate of the active site.

The protein belongs to the SelU family. In terms of assembly, monomer.

It carries out the reaction 5-methylaminomethyl-2-thiouridine(34) in tRNA + selenophosphate + (2E)-geranyl diphosphate + H2O + H(+) = 5-methylaminomethyl-2-selenouridine(34) in tRNA + (2E)-thiogeraniol + phosphate + diphosphate. The enzyme catalyses 5-methylaminomethyl-2-thiouridine(34) in tRNA + (2E)-geranyl diphosphate = 5-methylaminomethyl-S-(2E)-geranyl-thiouridine(34) in tRNA + diphosphate. It catalyses the reaction 5-methylaminomethyl-S-(2E)-geranyl-thiouridine(34) in tRNA + selenophosphate + H(+) = 5-methylaminomethyl-2-(Se-phospho)selenouridine(34) in tRNA + (2E)-thiogeraniol. The catalysed reaction is 5-methylaminomethyl-2-(Se-phospho)selenouridine(34) in tRNA + H2O = 5-methylaminomethyl-2-selenouridine(34) in tRNA + phosphate. Involved in the post-transcriptional modification of the uridine at the wobble position (U34) of tRNA(Lys), tRNA(Glu) and tRNA(Gln). Catalyzes the conversion of 2-thiouridine (S2U-RNA) to 2-selenouridine (Se2U-RNA). Acts in a two-step process involving geranylation of 2-thiouridine (S2U) to S-geranyl-2-thiouridine (geS2U) and subsequent selenation of the latter derivative to 2-selenouridine (Se2U) in the tRNA chain. This chain is tRNA 2-selenouridine synthase, found in Shewanella pealeana (strain ATCC 700345 / ANG-SQ1).